The chain runs to 179 residues: Ribosome-recycling factor (179 aa).

This sequence belongs to the RRF family.

It is found in the cytoplasm. In terms of biological role, responsible for the release of ribosomes from messenger RNA at the termination of protein biosynthesis. May increase the efficiency of translation by recycling ribosomes from one round of translation to another. The chain is Ribosome-recycling factor from Chlamydia muridarum (strain MoPn / Nigg).